The sequence spans 158 residues: 2-C-methyl-D-erythritol 2,4-cyclodiphosphate synthase (158 aa).

Residues Asp9 and His11 each coordinate a divalent metal cation. 4-CDP-2-C-methyl-D-erythritol 2-phosphate-binding positions include 9–11 (DVH) and 35–36 (HS). His43 serves as a coordination point for a divalent metal cation. 4-CDP-2-C-methyl-D-erythritol 2-phosphate contacts are provided by residues 57-59 (DIG), 62-66 (FPDTD), 101-107 (AQKPKMA), 133-136 (TTTE), Phe140, and Arg143.

It belongs to the IspF family. As to quaternary structure, homotrimer. A divalent metal cation is required as a cofactor.

It carries out the reaction 4-CDP-2-C-methyl-D-erythritol 2-phosphate = 2-C-methyl-D-erythritol 2,4-cyclic diphosphate + CMP. The protein operates within isoprenoid biosynthesis; isopentenyl diphosphate biosynthesis via DXP pathway; isopentenyl diphosphate from 1-deoxy-D-xylulose 5-phosphate: step 4/6. Its function is as follows. Involved in the biosynthesis of isopentenyl diphosphate (IPP) and dimethylallyl diphosphate (DMAPP), two major building blocks of isoprenoid compounds. Catalyzes the conversion of 4-diphosphocytidyl-2-C-methyl-D-erythritol 2-phosphate (CDP-ME2P) to 2-C-methyl-D-erythritol 2,4-cyclodiphosphate (ME-CPP) with a corresponding release of cytidine 5-monophosphate (CMP). This is 2-C-methyl-D-erythritol 2,4-cyclodiphosphate synthase from Bacillus cereus (strain ATCC 10987 / NRS 248).